A 73-amino-acid chain; its full sequence is U3-agatoxin-Ao1j (73 aa).

The signal sequence occupies residues 1–20; the sequence is MRTIISLLLLSAMVFAVIEA. The propeptide occupies 21 to 34; that stretch reads ISLEEGLQLFEGER. Intrachain disulfides connect C36/C52, C43/C57, C51/C67, and C59/C65. Serine amide is present on S71.

It belongs to the neurotoxin 07 (Beta/delta-agtx) family. 03 (aga-4) subfamily. Aga sub-subfamily. In terms of tissue distribution, expressed by the venom gland.

The protein localises to the secreted. Its function is as follows. Insecticidal neurotoxin that induces an irreversible spastic paralysis when injected into insects. Modifies presynaptic voltage-gated sodium channels (Nav), causing them to open at the normal resting potential of the nerve. This leads to spontaneous release of neurotransmitter and repetitive action potentials in motor neurons. This chain is U3-agatoxin-Ao1j, found in Agelena orientalis (Funnel-web spider).